The following is a 329-amino-acid chain: MISPVPSIPRSAHRQRPEATPYVDLTRPEWSALRDKTPLPLTAEEVEKLRGLGDVIDLDEVRDIYLPLSRLLNLYVGATDGLRGALNTFLGEQGSQSGTPFVIGVAGSVAVGKSTVARLLQALLSRWPEHPRVELVTTDGFLLPTRELEARGLMSRKGFPESYDRRALTRFVADIKAGKAEVTAPVYSHLIYDIVPDQRLVVRRPDILIVEGLNVLQPALPGKDGRTRVGLADYFDFSVYVDARTEDIERWYLNRFRKLRATAFQNPSSYFRKYTQVSEEEALDYARTTWRTINKPNLVENVAPTRGRATLVLRKGPDHKVQRLSLRKL.

Positions 1–21 (MISPVPSIPRSAHRQRPEATP) are disordered. 107–114 (GSVAVGKS) contributes to the ATP binding site.

The protein belongs to the prokaryotic pantothenate kinase family.

The protein resides in the cytoplasm. The catalysed reaction is (R)-pantothenate + ATP = (R)-4'-phosphopantothenate + ADP + H(+). It functions in the pathway cofactor biosynthesis; coenzyme A biosynthesis; CoA from (R)-pantothenate: step 1/5. The sequence is that of Pantothenate kinase (coaA) from Streptomyces coelicolor (strain ATCC BAA-471 / A3(2) / M145).